The following is an 88-amino-acid chain: MKEGIHPDYRDVVFQDMSNDFKFITRSTIQTRETIEFEGASYPLVKIEVSSESHPFYTGKHKIVDTAGRVDKFRKKFGTVGSKTSVAE.

It belongs to the bacterial ribosomal protein bL31 family. Type B subfamily. In terms of assembly, part of the 50S ribosomal subunit.

In Janthinobacterium sp. (strain Marseille) (Minibacterium massiliensis), this protein is Large ribosomal subunit protein bL31B.